A 518-amino-acid chain; its full sequence is E3 ubiquitin-protein ligase TRIM39 (518 aa).

Residues 29–70 (CSVCLEYLKEPVIIECGHNFCKACITRWWEDLERDFPCPVCR) form an RING-type zinc finger. The B box-type zinc-finger motif lies at 102-143 (RDESLCPQHHEALSLFCYEDQEAVCLICAISHTHRAHTVVPL). The Zn(2+) site is built by cysteine 107, histidine 110, cysteine 129, and histidine 135. Residues 181-250 (ELKRLVESRR…AHLAAEVEGK (70 aa)) are a coiled coil. 2 interaction with CDKN1A regions span residues 268 to 337 (KNIP…QLIA) and 389 to 518 (TSGR…TDWE). Residues 319–514 (SNFPRQYFAL…NAAPLTIRPP (196 aa)) enclose the B30.2/SPRY domain.

The protein belongs to the TRIM/RBCC family. As to quaternary structure, isoform 1 interacts with MOAP1. Isoform 1 and isoform 2 interact with CDKN1A. Isoform 2 interacts (via domain B box-type) with CACTIN. In terms of processing, autoubiquitinated. As to expression, ubiquitous; highly expressed in brain, heart, kidney, liver, skeletal muscle, spleen and testis.

It localises to the cytoplasm. The protein resides in the cytosol. It is found in the mitochondrion. Its subcellular location is the nucleus. The enzyme catalyses S-ubiquitinyl-[E2 ubiquitin-conjugating enzyme]-L-cysteine + [acceptor protein]-L-lysine = [E2 ubiquitin-conjugating enzyme]-L-cysteine + N(6)-ubiquitinyl-[acceptor protein]-L-lysine.. It participates in protein modification; protein ubiquitination. E3 ubiquitin-protein ligase. May facilitate apoptosis by inhibiting APC/C-Cdh1-mediated poly-ubiquitination and subsequent proteasome-mediated degradation of the pro-apoptotic protein MOAP1. Regulates the G1/S transition of the cell cycle and DNA damage-induced G2 arrest by stabilizing CDKN1A/p21. Positively regulates CDKN1A/p21 stability by competing with DTL for CDKN1A/p21 binding, therefore disrupting DCX(DTL) E3 ubiquitin ligase complex-mediated CDKN1A/p21 ubiquitination and degradation. Its function is as follows. Regulates the G1/S transition of the cell cycle and DNA damage-induced G2 arrest by stabilizing CDKN1A/p21. Positively regulates CDKN1A/p21 stability by competing with DTL for CDKN1A/p21 binding, therefore disrupting DCX(DTL) E3 ubiquitin ligase complex-mediated CDKN1A/p21 ubiquitination and degradation. Negatively regulates the canonical NF-kappa-B signaling pathway via stabilization of CACTIN in an ubiquitination-independent manner. In Homo sapiens (Human), this protein is E3 ubiquitin-protein ligase TRIM39 (TRIM39).